Consider the following 435-residue polypeptide: MSLPVVALVGRPNVGKSTIFNRIINSRVAIVEDKAGVTRDRIYARAEWMGHEFILIDTGGITLDSGEIEEQIKAQAEIAIDEADVIVMLGDVTQHMTNMDETIAKMLYRTKKPVILAINKADNPEQRTDIYDFYSLGLGDPIPVSGSHGTGMGDLLDAIVGEFGDKANQHEDGSIRFSVIGRPNVGKSSLVNAILGEQRVIVSNIEGTTRDAIDTTFTNDGQKYTIVDTAGIRRRGKVYEKTEKYSVLRAISAIEESDITLLVLDASTGIREQDKHVAGYAHDAGRGVIIVVNKWDLPKKDSRSMKDFEDTIRREFQYLDYAPIIFVSAKTGQRVPDILKLVKEVHENQTRRIQSSVLNDLLLEATRITPTPLVNGKRLRIYYMTQVAVTPPTFVVFVNDPELLHFSYQRFLINQLRQNFDFVGTPIKILARKRK.

2 EngA-type G domains span residues P4–A167 and I175–T350. Residues G10–S17, D57–I61, N119–D122, G181–S188, D228–I232, and N293–D296 contribute to the GTP site. The region spanning R351 to K435 is the KH-like domain.

This sequence belongs to the TRAFAC class TrmE-Era-EngA-EngB-Septin-like GTPase superfamily. EngA (Der) GTPase family. In terms of assembly, associates with the 50S ribosomal subunit.

In terms of biological role, GTPase that plays an essential role in the late steps of ribosome biogenesis. This is GTPase Der from Lactobacillus johnsonii (strain CNCM I-12250 / La1 / NCC 533).